The following is a 217-amino-acid chain: Protein OPI10 homolog (217 aa).

The protein belongs to the OPI10 family.

The protein is Protein OPI10 homolog of Dictyostelium discoideum (Social amoeba).